A 421-amino-acid polypeptide reads, in one-letter code: UPF0415 protein C7orf25 (421 aa).

The protein belongs to the UPF0415 family.

The chain is UPF0415 protein C7orf25 (C7orf25) from Homo sapiens (Human).